Reading from the N-terminus, the 194-residue chain is RNA polymerase II subunit A C-terminal domain phosphatase SSU72 like protein 4 (194 aa).

The protein belongs to the SSU72 phosphatase family.

It is found in the nucleus. The catalysed reaction is O-phospho-L-seryl-[protein] + H2O = L-seryl-[protein] + phosphate. The enzyme catalyses O-phospho-L-threonyl-[protein] + H2O = L-threonyl-[protein] + phosphate. Protein phosphatase that catalyzes the dephosphorylation of the C-terminal domain of RNA polymerase II. Plays a role in RNA processing and termination. This chain is RNA polymerase II subunit A C-terminal domain phosphatase SSU72 like protein 4, found in Homo sapiens (Human).